Reading from the N-terminus, the 207-residue chain is Vascular endothelial growth factor B (207 aa).

An N-terminal signal peptide occupies residues 1–21; the sequence is MSPLLRRLLLVALLQLACTQA. Disulfide bonds link C78–C122 and C82–C124. The segment at 140–182 is disordered; that stretch reads IPHHRPQPRSVLSWDSAPGASSPADIIHPTPAPGPSAHAAPSA.

The protein belongs to the PDGF/VEGF growth factor family. In terms of assembly, homodimer; disulfide-linked. Can also form heterodimer with VEGF.

It is found in the secreted. Functionally, growth factor for endothelial cells. VEGF-B167 binds heparin and neuropilin-1 whereas the binding to neuropilin-1 of VEGF-B186 is regulated by proteolysis. This Rattus norvegicus (Rat) protein is Vascular endothelial growth factor B (Vegfb).